The sequence spans 351 residues: Hydroxymethylglutaryl-CoA synthase (351 aa).

Residue E80 is the Proton donor/acceptor of the active site. C112 (acyl-thioester intermediate) is an active-site residue. C112 and S153 together coordinate (3S)-3-hydroxy-3-methylglutaryl-CoA. R199 serves as a coordination point for CoA. (3S)-3-hydroxy-3-methylglutaryl-CoA is bound by residues T201 and H234. The Proton donor/acceptor role is filled by H234. Residue K239 coordinates CoA. The (3S)-3-hydroxy-3-methylglutaryl-CoA site is built by R243, N266, and S296.

The protein belongs to the thiolase-like superfamily. Archaeal HMG-CoA synthase family. Interacts with acetoacetyl-CoA thiolase that catalyzes the precedent step in the pathway and with a DUF35 protein. The acetoacetyl-CoA thiolase/HMG-CoA synthase complex channels the intermediate via a fused CoA-binding site, which allows for efficient coupling of the endergonic thiolase reaction with the exergonic HMGCS reaction.

It carries out the reaction acetoacetyl-CoA + acetyl-CoA + H2O = (3S)-3-hydroxy-3-methylglutaryl-CoA + CoA + H(+). Its pathway is metabolic intermediate biosynthesis; (R)-mevalonate biosynthesis; (R)-mevalonate from acetyl-CoA: step 2/3. Its function is as follows. Catalyzes the condensation of acetyl-CoA with acetoacetyl-CoA to form 3-hydroxy-3-methylglutaryl-CoA (HMG-CoA). Functions in the mevalonate (MVA) pathway leading to isopentenyl diphosphate (IPP), a key precursor for the biosynthesis of isoprenoid compounds that are building blocks of archaeal membrane lipids. The polypeptide is Hydroxymethylglutaryl-CoA synthase (Thermoplasma volcanium (strain ATCC 51530 / DSM 4299 / JCM 9571 / NBRC 15438 / GSS1)).